We begin with the raw amino-acid sequence, 318 residues long: AT-hook motif nuclear-localized protein 7 (318 aa).

Disordered stretches follow at residues 1 to 76 (METS…PSSS) and 241 to 318 (SDQQ…LPVD). Positions 56 to 64 (KKRRGRPRK) match the Bipartite nuclear localization signal motif. A DNA-binding region (a.T hook) is located at residues 56-68 (KKRRGRPRKYEAN). One can recognise a PPC domain in the interval 120-259 (GSNFTPHVIT…RKQRVEHAPA (140 aa)). Over residues 243–256 (QQDHQKPRKQRVEH) the composition is skewed to basic and acidic residues. Residues 264–274 (VPPPPSPPPPA) show a composition bias toward pro residues. Residues 288-312 (PPSSFGISSWTNGQDMPRNSATDIN) are compositionally biased toward polar residues.

It is found in the nucleus. In terms of biological role, transcription factor that specifically binds AT-rich DNA sequences related to the nuclear matrix attachment regions (MARs). This is AT-hook motif nuclear-localized protein 7 from Arabidopsis thaliana (Mouse-ear cress).